Here is a 205-residue protein sequence, read N- to C-terminus: Holliday junction branch migration complex subunit RuvA (205 aa).

The domain I stretch occupies residues 1-64 (MIGKLKGVVD…EDMIRLYGFR (64 aa)). Positions 65–143 (SDAEREWFRL…AFAPVDPALV (79 aa)) are domain II. The tract at residues 144 to 152 (RLAGAVEAR) is flexible linker. The domain III stretch occupies residues 153 to 205 (TAPQPVADAISALVNLGYPQAQASAAVAAALQSAGAEAEAKTLIRLGLRELAR).

Belongs to the RuvA family. As to quaternary structure, homotetramer. Forms an RuvA(8)-RuvB(12)-Holliday junction (HJ) complex. HJ DNA is sandwiched between 2 RuvA tetramers; dsDNA enters through RuvA and exits via RuvB. An RuvB hexamer assembles on each DNA strand where it exits the tetramer. Each RuvB hexamer is contacted by two RuvA subunits (via domain III) on 2 adjacent RuvB subunits; this complex drives branch migration. In the full resolvosome a probable DNA-RuvA(4)-RuvB(12)-RuvC(2) complex forms which resolves the HJ.

The protein localises to the cytoplasm. Functionally, the RuvA-RuvB-RuvC complex processes Holliday junction (HJ) DNA during genetic recombination and DNA repair, while the RuvA-RuvB complex plays an important role in the rescue of blocked DNA replication forks via replication fork reversal (RFR). RuvA specifically binds to HJ cruciform DNA, conferring on it an open structure. The RuvB hexamer acts as an ATP-dependent pump, pulling dsDNA into and through the RuvAB complex. HJ branch migration allows RuvC to scan DNA until it finds its consensus sequence, where it cleaves and resolves the cruciform DNA. The chain is Holliday junction branch migration complex subunit RuvA from Methylobacterium sp. (strain 4-46).